The chain runs to 206 residues: Thymidylate kinase (206 aa).

10–17 (GIDGAGKS) serves as a coordination point for ATP.

Belongs to the thymidylate kinase family.

The catalysed reaction is dTMP + ATP = dTDP + ADP. Its function is as follows. Phosphorylation of dTMP to form dTDP in both de novo and salvage pathways of dTTP synthesis. The sequence is that of Thymidylate kinase from Neisseria gonorrhoeae (strain ATCC 700825 / FA 1090).